Consider the following 341-residue polypeptide: Cathepsin B-like cysteine proteinase 1 (341 aa).

The first 19 residues, 1 to 19 (MKYLFFALCLYLYQGISEA), serve as a signal peptide directing secretion. A propeptide spans 20 to 88 (EVPAEQIPLE…VEDEELEENN (69 aa)) (activation peptide). Asn-103 is a glycosylation site (N-linked (GlcNAc...) asparagine). 6 cysteine pairs are disulfide-bonded: Cys-104-Cys-133, Cys-116-Cys-160, Cys-152-Cys-218, Cys-153-Cys-156, Cys-189-Cys-222, and Cys-197-Cys-209. Residue Cys-119 is part of the active site. The N-linked (GlcNAc...) asparagine glycan is linked to Asn-202. Catalysis depends on residues His-288 and Asn-308.

The protein belongs to the peptidase C1 family.

In terms of biological role, expression of the protease correlates with blood-feeding and suggests a role for the protease in blood digestion. The polypeptide is Cathepsin B-like cysteine proteinase 1 (CP-1) (Ostertagia ostertagi (Brown stomach worm)).